Reading from the N-terminus, the 300-residue chain is Ribonuclease HIII (300 aa).

Positions Ile83–Lys300 constitute an RNase H type-2 domain. A divalent metal cation contacts are provided by Asp89, Glu90, and Asp194.

The protein belongs to the RNase HII family. RnhC subfamily. Requires Mn(2+) as cofactor. It depends on Mg(2+) as a cofactor.

The protein localises to the cytoplasm. The catalysed reaction is Endonucleolytic cleavage to 5'-phosphomonoester.. Its function is as follows. Endonuclease that specifically degrades the RNA of RNA-DNA hybrids. The polypeptide is Ribonuclease HIII (Streptococcus pyogenes serotype M1).